We begin with the raw amino-acid sequence, 365 residues long: MFLKHLTIQNFRNHEELSLDFDSRLIFFVGDNGEGKTNLLEAICILSWLKSFRESEDSNLIRWGSENYFLRGKIKNNLKESVLEIGFTSKPSVKRKLKFNQEEIKKRTDLIGKFITVLLTPMDLKIIEGGPAERRKFIDAFISSFDPFYLEFLLEYNKILKHRNALLKSGNLDISHLSIWDKKIVEKGIFILNKRREVVLELNSFYRVNLDKLSGGKDGLELIYKPNVKDQDEFLEKLNRNLSRDLRLGYTSVGIHRDDLFIGTDQRDITEFGSQGQKRSTVIALKAATFNYYKDILNTIPVLLIDDVIRELDVKRREYFVDLVVTAGQAFFTTTDLEGIQDYVGKLKDQKQIFLIRQGKVEPIK.

30-37 (GDNGEGKT) lines the ATP pocket.

It belongs to the RecF family.

It localises to the cytoplasm. In terms of biological role, the RecF protein is involved in DNA metabolism; it is required for DNA replication and normal SOS inducibility. RecF binds preferentially to single-stranded, linear DNA. It also seems to bind ATP. This is DNA replication and repair protein RecF from Leptospira interrogans serogroup Icterohaemorrhagiae serovar copenhageni (strain Fiocruz L1-130).